Consider the following 482-residue polypeptide: uncharacterized protein (482 aa).

Residues Phe-231–Asp-459 form the AB hydrolase-1 domain.

This is an uncharacterized protein from Caenorhabditis elegans.